The following is a 465-amino-acid chain: Protein CitXG (465 aa).

An apo-citrate lyase phosphoribosyl-dephospho-CoA transferase region spans residues 1-182 (MQHFFTTFST…QSLAQNHDFA (182 aa)). The tract at residues 183–465 (EHIGEQVYLA…TIFFLSFRGN (283 aa)) is 2-(5''-triphosphoribosyl)-3'-dephosphocoenzyme-A synthase.

This sequence in the N-terminal section; belongs to the CitX family. In the C-terminal section; belongs to the CitG/MdcB family.

The enzyme catalyses apo-[citrate lyase ACP] + 2'-(5''-triphospho-alpha-D-ribosyl)-3'-dephospho-CoA = holo-[citrate lyase ACP] + diphosphate. It carries out the reaction 3'-dephospho-CoA + ATP = 2'-(5''-triphospho-alpha-D-ribosyl)-3'-dephospho-CoA + adenine. In terms of biological role, bifunctional enzyme that catalyzes formation of 2-(5''-triphosphoribosyl)-3'-dephosphocoenzyme-A, and then the transfer of this prosthetic group precursor to the apo-acyl carrier protein (gamma chain) of the citrate lyase to yield the holo-acyl carrier protein. The chain is Protein CitXG (citXG) from Haemophilus influenzae (strain ATCC 51907 / DSM 11121 / KW20 / Rd).